The chain runs to 39 residues: L-amino-acid oxidase (39 aa).

It belongs to the flavin monoamine oxidase family. FIG1 subfamily. Monomer. This is in contrast with most of its orthologs, that are non-covalently linked homodimers. FAD is required as a cofactor. In terms of processing, N-glycosylated. In terms of tissue distribution, expressed by the venom gland.

The protein resides in the secreted. The catalysed reaction is an L-alpha-amino acid + O2 + H2O = a 2-oxocarboxylate + H2O2 + NH4(+). The enzyme catalyses L-leucine + O2 + H2O = 4-methyl-2-oxopentanoate + H2O2 + NH4(+). Its function is as follows. Catalyzes an oxidative deamination of predominantly hydrophobic and aromatic L-amino acids, thus producing hydrogen peroxide that may contribute to the diverse toxic effects of this enzyme. Shows activity on L-Leu. Exhibits diverse biological activities, such as hemorrhage, hemolysis, edema, apoptosis of vascular endothelial cells or tumor cell lines, and antiparasitic activities, as well as regulation of platelet aggregation. Effects of snake L-amino oxidases on platelets are controversial, since they either induce aggregation or inhibit agonist-induced aggregation. These different effects are probably due to different experimental conditions. In addition, this protein inhibits dose-dependently the growth of Gram-positive, Gram-negative bacteria and yeast, probably by the generation of hydrogen peroxide. The sequence is that of L-amino-acid oxidase from Bothrops marajoensis (Marajo lancehead).